We begin with the raw amino-acid sequence, 585 residues long: Acetolactate synthase large subunit (585 aa).

Glu-60 serves as a coordination point for thiamine diphosphate. Residues Arg-162, 272-293 (HGTAYANFAVSECDLLIALGAR), and 315-334 (DIDPAEIGKNRIPQLAIISD) each bind FAD. Positions 407-486 (QHQMWAAQFL…IKIFIINNQW (80 aa)) are thiamine pyrophosphate binding. Positions 457 and 484 each coordinate Mg(2+).

This sequence belongs to the TPP enzyme family. As to quaternary structure, dimer of large and small chains. Mg(2+) is required as a cofactor. Requires thiamine diphosphate as cofactor.

It localises to the plastid. The protein localises to the chloroplast. The catalysed reaction is 2 pyruvate + H(+) = (2S)-2-acetolactate + CO2. Its pathway is amino-acid biosynthesis; L-isoleucine biosynthesis; L-isoleucine from 2-oxobutanoate: step 1/4. It participates in amino-acid biosynthesis; L-valine biosynthesis; L-valine from pyruvate: step 1/4. The chain is Acetolactate synthase large subunit (ilvB) from Cyanidium caldarium (Red alga).